The following is a 210-amino-acid chain: Thiamine-phosphate synthase (210 aa).

4-amino-2-methyl-5-(diphosphooxymethyl)pyrimidine contacts are provided by residues 43–47 and asparagine 75; that span reads QLREK. Mg(2+)-binding residues include aspartate 76 and aspartate 95. Serine 114 lines the 4-amino-2-methyl-5-(diphosphooxymethyl)pyrimidine pocket. Position 140 to 142 (140 to 142) interacts with 2-[(2R,5Z)-2-carboxy-4-methylthiazol-5(2H)-ylidene]ethyl phosphate; that stretch reads TST. Lysine 143 contributes to the 4-amino-2-methyl-5-(diphosphooxymethyl)pyrimidine binding site. 2-[(2R,5Z)-2-carboxy-4-methylthiazol-5(2H)-ylidene]ethyl phosphate is bound by residues glycine 170 and 190–191; that span reads IS.

Belongs to the thiamine-phosphate synthase family. Mg(2+) is required as a cofactor.

It carries out the reaction 2-[(2R,5Z)-2-carboxy-4-methylthiazol-5(2H)-ylidene]ethyl phosphate + 4-amino-2-methyl-5-(diphosphooxymethyl)pyrimidine + 2 H(+) = thiamine phosphate + CO2 + diphosphate. The enzyme catalyses 2-(2-carboxy-4-methylthiazol-5-yl)ethyl phosphate + 4-amino-2-methyl-5-(diphosphooxymethyl)pyrimidine + 2 H(+) = thiamine phosphate + CO2 + diphosphate. It catalyses the reaction 4-methyl-5-(2-phosphooxyethyl)-thiazole + 4-amino-2-methyl-5-(diphosphooxymethyl)pyrimidine + H(+) = thiamine phosphate + diphosphate. It functions in the pathway cofactor biosynthesis; thiamine diphosphate biosynthesis; thiamine phosphate from 4-amino-2-methyl-5-diphosphomethylpyrimidine and 4-methyl-5-(2-phosphoethyl)-thiazole: step 1/1. Its function is as follows. Condenses 4-methyl-5-(beta-hydroxyethyl)thiazole monophosphate (THZ-P) and 2-methyl-4-amino-5-hydroxymethyl pyrimidine pyrophosphate (HMP-PP) to form thiamine monophosphate (TMP). The polypeptide is Thiamine-phosphate synthase (Clostridioides difficile (strain 630) (Peptoclostridium difficile)).